A 212-amino-acid polypeptide reads, in one-letter code: Cytochrome c biogenesis ATP-binding export protein CcmA (212 aa).

One can recognise an ABC transporter domain in the interval 7 to 209 (LSLQNLSCQR…HLQKLNLAAY (203 aa)). 39-46 (GHNGIGKT) lines the ATP pocket.

The protein belongs to the ABC transporter superfamily. CcmA exporter (TC 3.A.1.107) family. In terms of assembly, the complex is composed of two ATP-binding proteins (CcmA) and two transmembrane proteins (CcmB).

The protein resides in the cell inner membrane. It carries out the reaction heme b(in) + ATP + H2O = heme b(out) + ADP + phosphate + H(+). In terms of biological role, part of the ABC transporter complex CcmAB involved in the biogenesis of c-type cytochromes; once thought to export heme, this seems not to be the case, but its exact role is uncertain. Responsible for energy coupling to the transport system. The sequence is that of Cytochrome c biogenesis ATP-binding export protein CcmA from Haemophilus influenzae (strain ATCC 51907 / DSM 11121 / KW20 / Rd).